Here is a 55-residue protein sequence, read N- to C-terminus: MRDLKTYLSVAPVLSTLWFGSLAGLLIEINRFFPDALTFPFFLIRVIVAGRGEKD.

The helical transmembrane segment at Tyr-7 to Ile-27 threads the bilayer.

The protein belongs to the PsaJ family.

It is found in the plastid. It localises to the chloroplast thylakoid membrane. Its function is as follows. May help in the organization of the PsaE and PsaF subunits. This chain is Photosystem I reaction center subunit IX, found in Gossypium barbadense (Sea Island cotton).